The following is a 471-amino-acid chain: DnaJ protein P58IPK homolog B (471 aa).

The N-terminal stretch at 1–24 (MARWPWRWRVLLPLLLLHSSPVFA) is a signal peptide. TPR repeat units lie at residues 32-65 (PSTLFKRASEMMNLRKYDGSLGLLNAVLEVDPNH), 66-99 (SEAYRQRASVLRHKCRYKEAEGDYSKYLELKPGS), 112-146 (AQNALESAYGQFESHDFSKVLEYINKIVLVFSPNC), 148-180 (KAKLLKAKALLALEDYSSVISETGFILKEDEDN), 181-214 (LDALLLRGRAYYYLADHDVASRHYQKGLRLDPEH), 227-260 (LLKKTKSAEDNAAKGKLRVSAEDYKAALAMDPDH), 265-298 (VHLYLGLCKVLVKLGRGKEAISSCTEALNIDGEL), and 300-332 (DALTQRGEAKLLTEDWEGAVQDLKEASQKSPQD). Asn64 carries an N-linked (GlcNAc...) asparagine glycan. One can recognise a J domain in the interval 353–419 (DWYKILGISK…DKRVRYDRGE (67 aa)).

As to quaternary structure, interacts with BIP1.

The protein resides in the endoplasmic reticulum lumen. Its function is as follows. May play a role in protein folding in the endoplasmic reticulum. In Oryza sativa subsp. japonica (Rice), this protein is DnaJ protein P58IPK homolog B.